We begin with the raw amino-acid sequence, 376 residues long: CCA-adding enzyme (376 aa).

2 residues coordinate ATP: glycine 23 and arginine 26. Residues glycine 23 and arginine 26 each contribute to the CTP site. Mg(2+)-binding residues include glutamate 36 and aspartate 38. Arginine 106, arginine 152, and arginine 155 together coordinate ATP. 3 residues coordinate CTP: arginine 106, arginine 152, and arginine 155.

Belongs to the tRNA nucleotidyltransferase/poly(A) polymerase family. Bacterial CCA-adding enzyme type 2 subfamily. Mg(2+) is required as a cofactor.

The catalysed reaction is a tRNA precursor + 2 CTP + ATP = a tRNA with a 3' CCA end + 3 diphosphate. It carries out the reaction a tRNA with a 3' CCA end + 2 CTP + ATP = a tRNA with a 3' CCACCA end + 3 diphosphate. Functionally, catalyzes the addition and repair of the essential 3'-terminal CCA sequence in tRNAs without using a nucleic acid template. Adds these three nucleotides in the order of C, C, and A to the tRNA nucleotide-73, using CTP and ATP as substrates and producing inorganic pyrophosphate. tRNA 3'-terminal CCA addition is required both for tRNA processing and repair. Also involved in tRNA surveillance by mediating tandem CCA addition to generate a CCACCA at the 3' terminus of unstable tRNAs. While stable tRNAs receive only 3'-terminal CCA, unstable tRNAs are marked with CCACCA and rapidly degraded. This chain is CCA-adding enzyme, found in Coxiella burnetii (strain RSA 331 / Henzerling II).